A 474-amino-acid chain; its full sequence is Aspartyl/glutamyl-tRNA(Asn/Gln) amidotransferase subunit B (474 aa).

Belongs to the GatB/GatE family. GatB subfamily. As to quaternary structure, heterotrimer of A, B and C subunits.

It carries out the reaction L-glutamyl-tRNA(Gln) + L-glutamine + ATP + H2O = L-glutaminyl-tRNA(Gln) + L-glutamate + ADP + phosphate + H(+). The enzyme catalyses L-aspartyl-tRNA(Asn) + L-glutamine + ATP + H2O = L-asparaginyl-tRNA(Asn) + L-glutamate + ADP + phosphate + 2 H(+). Functionally, allows the formation of correctly charged Asn-tRNA(Asn) or Gln-tRNA(Gln) through the transamidation of misacylated Asp-tRNA(Asn) or Glu-tRNA(Gln) in organisms which lack either or both of asparaginyl-tRNA or glutaminyl-tRNA synthetases. The reaction takes place in the presence of glutamine and ATP through an activated phospho-Asp-tRNA(Asn) or phospho-Glu-tRNA(Gln). This is Aspartyl/glutamyl-tRNA(Asn/Gln) amidotransferase subunit B from Methanospirillum hungatei JF-1 (strain ATCC 27890 / DSM 864 / NBRC 100397 / JF-1).